A 208-amino-acid chain; its full sequence is Small ribosomal subunit protein uS4B (208 aa).

In terms of domain architecture, S4 RNA-binding spans 95 to 160 (KRLDNVVFRL…NQVYMAAKQA (66 aa)).

This sequence belongs to the universal ribosomal protein uS4 family. As to quaternary structure, part of the 30S ribosomal subunit. Contacts protein S5. The interaction surface between S4 and S5 is involved in control of translational fidelity.

In terms of biological role, one of the primary rRNA binding proteins, it binds directly to 16S rRNA where it nucleates assembly of the body of the 30S subunit. Functionally, with S5 and S12 plays an important role in translational accuracy. This chain is Small ribosomal subunit protein uS4B, found in Bdellovibrio bacteriovorus (strain ATCC 15356 / DSM 50701 / NCIMB 9529 / HD100).